The following is a 508-amino-acid chain: GATA zinc finger domain-containing protein 13 (508 aa).

2 disordered regions span residues 20–51 (YSKN…INNN) and 203–296 (MSII…PEIE). Low complexity predominate over residues 23-51 (NNNNNNNNNNNNNINNNNNNNNNNNINNN). Polar residues predominate over residues 203–224 (MSIIPSDNFPTPQLPLETNTDL). Low complexity predominate over residues 225-247 (NNTSDCSSTTFSSPPSSAFNSPN). Over residues 248-266 (LQNDYTQPQNQKSQSSTIV) the composition is skewed to polar residues. The segment covering 269-279 (NSSKSKSKNNK) has biased composition (basic residues). The GATA-type zinc finger occupies 327-354 (CSICKIKCSIYWRRILINEVRTSVCNAC). Residues 356-433 (LRTMKKTKKE…NNNNNNNNNN (78 aa)) adopt a coiled-coil conformation. The span at 399–482 (TTTTTTTTTS…NNNNNDNYND (84 aa)) shows a compositional bias: low complexity. The interval 399 to 484 (TTTTTTTTTS…NNNDNYNDSI (86 aa)) is disordered.

This Dictyostelium discoideum (Social amoeba) protein is GATA zinc finger domain-containing protein 13 (gtaM).